A 341-amino-acid chain; its full sequence is Glycerol-3-phosphate dehydrogenase [NAD(P)+] (341 aa).

NADPH contacts are provided by Ser15, Trp16, Arg36, and Lys110. The sn-glycerol 3-phosphate site is built by Lys110, Gly139, and Ser141. Ala143 is a binding site for NADPH. Lys194, Asp247, Ser257, Arg258, and Asn259 together coordinate sn-glycerol 3-phosphate. The active-site Proton acceptor is Lys194. Arg258 is a binding site for NADPH. NADPH-binding residues include Val282 and Glu284.

It belongs to the NAD-dependent glycerol-3-phosphate dehydrogenase family.

It is found in the cytoplasm. It catalyses the reaction sn-glycerol 3-phosphate + NAD(+) = dihydroxyacetone phosphate + NADH + H(+). The enzyme catalyses sn-glycerol 3-phosphate + NADP(+) = dihydroxyacetone phosphate + NADPH + H(+). The protein operates within membrane lipid metabolism; glycerophospholipid metabolism. In terms of biological role, catalyzes the reduction of the glycolytic intermediate dihydroxyacetone phosphate (DHAP) to sn-glycerol 3-phosphate (G3P), the key precursor for phospholipid synthesis. This Stenotrophomonas maltophilia (strain K279a) protein is Glycerol-3-phosphate dehydrogenase [NAD(P)+].